We begin with the raw amino-acid sequence, 72 residues long: Translation initiation factor IF-1 (72 aa).

An S1-like domain is found at 1–72 (MAKEDVIEIE…TRGRITYRFK (72 aa)).

The protein belongs to the IF-1 family. In terms of assembly, component of the 30S ribosomal translation pre-initiation complex which assembles on the 30S ribosome in the order IF-2 and IF-3, IF-1 and N-formylmethionyl-tRNA(fMet); mRNA recruitment can occur at any time during PIC assembly.

It is found in the cytoplasm. Its function is as follows. One of the essential components for the initiation of protein synthesis. Stabilizes the binding of IF-2 and IF-3 on the 30S subunit to which N-formylmethionyl-tRNA(fMet) subsequently binds. Helps modulate mRNA selection, yielding the 30S pre-initiation complex (PIC). Upon addition of the 50S ribosomal subunit IF-1, IF-2 and IF-3 are released leaving the mature 70S translation initiation complex. The chain is Translation initiation factor IF-1 from Streptococcus mutans serotype c (strain ATCC 700610 / UA159).